The chain runs to 597 residues: Aspartate--tRNA(Asp/Asn) ligase (597 aa).

L-aspartate is bound at residue Glu-175. The tract at residues 199–202 (QQYK) is aspartate. L-aspartate-binding residues include Arg-221 and His-454. Residue 221–223 (RDE) coordinates ATP. Glu-488 serves as a coordination point for ATP. Arg-495 provides a ligand contact to L-aspartate. 540-543 (GIDR) is an ATP binding site.

This sequence belongs to the class-II aminoacyl-tRNA synthetase family. Type 1 subfamily. Homodimer.

Its subcellular location is the cytoplasm. It catalyses the reaction tRNA(Asx) + L-aspartate + ATP = L-aspartyl-tRNA(Asx) + AMP + diphosphate. Functionally, aspartyl-tRNA synthetase with relaxed tRNA specificity since it is able to aspartylate not only its cognate tRNA(Asp) but also tRNA(Asn). Reaction proceeds in two steps: L-aspartate is first activated by ATP to form Asp-AMP and then transferred to the acceptor end of tRNA(Asp/Asn). The chain is Aspartate--tRNA(Asp/Asn) ligase from Bartonella tribocorum (strain CIP 105476 / IBS 506).